Here is a 1142-residue protein sequence, read N- to C-terminus: Fibronectin type-III domain-containing protein 3A (1142 aa).

A disordered region spans residues 104-191 (YGDVDAHSTH…KSGKGKGGTQ (88 aa)). The segment covering 107–145 (VDAHSTHGRSNFRDERSSKTYERLQKKLKDRQGTQKDKM) has biased composition (basic and acidic residues). The span at 146-158 (SSPPSSPQKCPSP) shows a compositional bias: low complexity. 3 positions are modified to phosphoserine: Ser147, Ser151, and Ser157. 9 consecutive Fibronectin type-III domains span residues 212–313 (NIVK…TLSC), 317–409 (IPNP…TSGC), 413–506 (MPAS…TCPD), 510–604 (IPVK…TPAV), 608–701 (PCLP…TAPG), 705–795 (QCKP…TPPS), 805–894 (EISD…TKPL), 895–989 (PPDP…TPKS), and 990–1095 (VPAA…TEPP). Lys328 carries the post-translational modification N6-acetyllysine. Residues 1121–1141 (NLVLFAFFSILIAFIIQYFVI) traverse the membrane as a helical segment.

This sequence belongs to the FNDC3 family.

It is found in the golgi apparatus membrane. In terms of biological role, mediates spermatid-Sertoli adhesion during spermatogenesis. This Pongo abelii (Sumatran orangutan) protein is Fibronectin type-III domain-containing protein 3A (FNDC3A).